The sequence spans 206 residues: Probable nicotinate-nucleotide adenylyltransferase (206 aa).

It belongs to the NadD family.

It carries out the reaction nicotinate beta-D-ribonucleotide + ATP + H(+) = deamido-NAD(+) + diphosphate. The protein operates within cofactor biosynthesis; NAD(+) biosynthesis; deamido-NAD(+) from nicotinate D-ribonucleotide: step 1/1. Functionally, catalyzes the reversible adenylation of nicotinate mononucleotide (NaMN) to nicotinic acid adenine dinucleotide (NaAD). This is Probable nicotinate-nucleotide adenylyltransferase from Paenarthrobacter aurescens (strain TC1).